We begin with the raw amino-acid sequence, 379 residues long: Chaperone protein DnaJ (379 aa).

Positions 5 to 70 (DYYEILEVSR…EKRAAYDRYG (66 aa)) constitute a J domain. The CR-type zinc-finger motif lies at 135 to 213 (GIKVPISYVT…CGGSGRVRNE (79 aa)). 8 residues coordinate Zn(2+): Cys148, Cys151, Cys165, Cys168, Cys187, Cys190, Cys201, and Cys204. 4 CXXCXGXG motif repeats span residues 148 to 155 (CSSCSGIG), 165 to 172 (CGNCNGAG), 187 to 194 (CNVCNGEG), and 201 to 208 (CRRCGGSG).

Belongs to the DnaJ family. As to quaternary structure, homodimer. Requires Zn(2+) as cofactor.

The protein localises to the cytoplasm. Participates actively in the response to hyperosmotic and heat shock by preventing the aggregation of stress-denatured proteins and by disaggregating proteins, also in an autonomous, DnaK-independent fashion. Unfolded proteins bind initially to DnaJ; upon interaction with the DnaJ-bound protein, DnaK hydrolyzes its bound ATP, resulting in the formation of a stable complex. GrpE releases ADP from DnaK; ATP binding to DnaK triggers the release of the substrate protein, thus completing the reaction cycle. Several rounds of ATP-dependent interactions between DnaJ, DnaK and GrpE are required for fully efficient folding. Also involved, together with DnaK and GrpE, in the DNA replication of plasmids through activation of initiation proteins. In Anaplasma marginale (strain Florida), this protein is Chaperone protein DnaJ.